Reading from the N-terminus, the 103-residue chain is Small ribosomal subunit protein uS10 (103 aa).

This sequence belongs to the universal ribosomal protein uS10 family. Part of the 30S ribosomal subunit.

In terms of biological role, involved in the binding of tRNA to the ribosomes. This chain is Small ribosomal subunit protein uS10, found in Syntrophobacter fumaroxidans (strain DSM 10017 / MPOB).